Here is a 306-residue protein sequence, read N- to C-terminus: Esterase tropF (306 aa).

Catalysis depends on charge relay system residues serine 147, aspartate 248, and histidine 276.

This sequence belongs to the LovG family.

It functions in the pathway secondary metabolite biosynthesis. In terms of biological role, esterase; part of the gene cluster that mediates the biosynthesis of the tropolone class of fungal maleic anhydrides. The pathway begins with the synthesis of 3-methylorcinaldehyde by the non-reducing polyketide synthase (PKS) tropA. 3-methylorcinaldehyde is the substrate for the FAD-dependent monooxygenase tropB to yield a dearomatized hydroxycyclohexadione. The 2-oxoglutarate-dependent dioxygenase tropC then performs the oxidative ring expansion to provide the first tropolone metabolite stipitaldehyde. Trop D converts stipitaldehyde into stipitacetal which is in turn converted to stipitalide by the short-chain dehydrogenase/reductase tropE. The next steps involve tropF, tropG, tropH, tropI and tropJ to form successive tropolone maleic anhydrides including stipitaldehydic, stipitatonic and stipitatic acids. This chain is Esterase tropF, found in Talaromyces stipitatus (strain ATCC 10500 / CBS 375.48 / QM 6759 / NRRL 1006) (Penicillium stipitatum).